A 155-amino-acid chain; its full sequence is Peptide methionine sulfoxide reductase MsrB (155 aa).

In terms of domain architecture, MsrB spans 15–137; sequence REALIATLNA…NSVSLTFIPT (123 aa). Zn(2+) contacts are provided by C54, C57, C103, and C106. C126 (nucleophile) is an active-site residue.

Belongs to the MsrB Met sulfoxide reductase family. Zn(2+) serves as cofactor.

The catalysed reaction is L-methionyl-[protein] + [thioredoxin]-disulfide + H2O = L-methionyl-(R)-S-oxide-[protein] + [thioredoxin]-dithiol. The chain is Peptide methionine sulfoxide reductase MsrB from Xylella fastidiosa (strain 9a5c).